Here is a 76-residue protein sequence, read N- to C-terminus: Small ribosomal subunit protein bS18 (76 aa).

It belongs to the bacterial ribosomal protein bS18 family. Part of the 30S ribosomal subunit. Forms a tight heterodimer with protein bS6.

In terms of biological role, binds as a heterodimer with protein bS6 to the central domain of the 16S rRNA, where it helps stabilize the platform of the 30S subunit. The protein is Small ribosomal subunit protein bS18 of Marinomonas sp. (strain MWYL1).